Here is a 329-residue protein sequence, read N- to C-terminus: Serpentine receptor class alpha-8 (329 aa).

6 consecutive transmembrane segments (helical) span residues 26–46, 60–80, 141–161, 187–207, 231–251, and 273–293; these read VDLITSFFTYMLSIIAIKMVL, FLNIFYANLYQIVYSIDVVVI, IFVGSFIAIVVMISTTSTGKL, TIHFYISTVVSLFNLAASVAL, VIESTETICFLNFTQFVFMFI, and FWVVWCYTVPFIALTFPLLLI.

It belongs to the nematode receptor-like protein sra family.

It localises to the membrane. The sequence is that of Serpentine receptor class alpha-8 (sra-8) from Caenorhabditis elegans.